Consider the following 233-residue polypeptide: Orotidine 5'-phosphate decarboxylase (233 aa).

Substrate is bound by residues aspartate 13, lysine 35, 62–71 (DLKFHDIPNT), threonine 122, arginine 182, glutamine 191, glycine 211, and arginine 212. Catalysis depends on lysine 64, which acts as the Proton donor.

The protein belongs to the OMP decarboxylase family. Type 1 subfamily. In terms of assembly, homodimer.

It catalyses the reaction orotidine 5'-phosphate + H(+) = UMP + CO2. The protein operates within pyrimidine metabolism; UMP biosynthesis via de novo pathway; UMP from orotate: step 2/2. Its function is as follows. Catalyzes the decarboxylation of orotidine 5'-monophosphate (OMP) to uridine 5'-monophosphate (UMP). The protein is Orotidine 5'-phosphate decarboxylase of Pseudomonas putida (strain ATCC 47054 / DSM 6125 / CFBP 8728 / NCIMB 11950 / KT2440).